We begin with the raw amino-acid sequence, 502 residues long: T-complex protein 11-like X-linked protein 2 (502 aa).

A disordered region spans residues 1 to 36; that stretch reads MPKTEETVLQNDPSVAENGAPEPKTPGQSQKSKSFC.

The protein belongs to the TCP11 family.

This Homo sapiens (Human) protein is T-complex protein 11-like X-linked protein 2.